The chain runs to 260 residues: DNA repair protein RecO (260 aa).

It belongs to the RecO family.

Its function is as follows. Involved in DNA repair and RecF pathway recombination. In Salinibacter ruber (strain DSM 13855 / M31), this protein is DNA repair protein RecO.